A 346-amino-acid chain; its full sequence is Zinc-type alcohol dehydrogenase-like protein C1773.06c (346 aa).

This sequence belongs to the zinc-containing alcohol dehydrogenase family. Quinone oxidoreductase subfamily.

It localises to the cytoplasm. This Schizosaccharomyces pombe (strain 972 / ATCC 24843) (Fission yeast) protein is Zinc-type alcohol dehydrogenase-like protein C1773.06c.